A 245-amino-acid polypeptide reads, in one-letter code: tRNA (guanine-N(1)-)-methyltransferase (245 aa).

Residues glycine 113 and 133–138 (IGDYVL) contribute to the S-adenosyl-L-methionine site.

It belongs to the RNA methyltransferase TrmD family. In terms of assembly, homodimer.

The protein localises to the cytoplasm. It catalyses the reaction guanosine(37) in tRNA + S-adenosyl-L-methionine = N(1)-methylguanosine(37) in tRNA + S-adenosyl-L-homocysteine + H(+). In terms of biological role, specifically methylates guanosine-37 in various tRNAs. The chain is tRNA (guanine-N(1)-)-methyltransferase from Actinobacillus succinogenes (strain ATCC 55618 / DSM 22257 / CCUG 43843 / 130Z).